The following is a 309-amino-acid chain: S-methyl-5'-thioadenosine phosphorylase (309 aa).

Residues threonine 19, arginine 64–histidine 65, and serine 97–alanine 98 contribute to the phosphate site. Methionine 201 is a binding site for substrate. Serine 202 provides a ligand contact to phosphate. Aspartate 225–aspartate 227 provides a ligand contact to substrate.

This sequence belongs to the PNP/MTAP phosphorylase family. MTAP subfamily. In terms of assembly, homotrimer.

The protein localises to the cytoplasm. The protein resides in the nucleus. The catalysed reaction is S-methyl-5'-thioadenosine + phosphate = 5-(methylsulfanyl)-alpha-D-ribose 1-phosphate + adenine. It functions in the pathway amino-acid biosynthesis; L-methionine biosynthesis via salvage pathway; S-methyl-5-thio-alpha-D-ribose 1-phosphate from S-methyl-5'-thioadenosine (phosphorylase route): step 1/1. Functionally, catalyzes the reversible phosphorylation of S-methyl-5'-thioadenosine (MTA) to adenine and 5-methylthioribose-1-phosphate. Involved in the breakdown of MTA, a major by-product of polyamine biosynthesis. Responsible for the first step in the methionine salvage pathway after MTA has been generated from S-adenosylmethionine. Has broad substrate specificity with 6-aminopurine nucleosides as preferred substrates. This chain is S-methyl-5'-thioadenosine phosphorylase, found in Tuber melanosporum (strain Mel28) (Perigord black truffle).